Here is a 269-residue protein sequence, read N- to C-terminus: Putative pyruvate, phosphate dikinase regulatory protein (269 aa).

147-154 (GVSRTSKT) contacts ADP.

The protein belongs to the pyruvate, phosphate/water dikinase regulatory protein family. PDRP subfamily.

It carries out the reaction N(tele)-phospho-L-histidyl/L-threonyl-[pyruvate, phosphate dikinase] + ADP = N(tele)-phospho-L-histidyl/O-phospho-L-threonyl-[pyruvate, phosphate dikinase] + AMP + H(+). The catalysed reaction is N(tele)-phospho-L-histidyl/O-phospho-L-threonyl-[pyruvate, phosphate dikinase] + phosphate + H(+) = N(tele)-phospho-L-histidyl/L-threonyl-[pyruvate, phosphate dikinase] + diphosphate. Functionally, bifunctional serine/threonine kinase and phosphorylase involved in the regulation of the pyruvate, phosphate dikinase (PPDK) by catalyzing its phosphorylation/dephosphorylation. The chain is Putative pyruvate, phosphate dikinase regulatory protein from Geotalea uraniireducens (strain Rf4) (Geobacter uraniireducens).